Reading from the N-terminus, the 184-residue chain is ATP synthase subunit b, chloroplastic (184 aa).

Residues 27 to 49 (LATNLINLSVVLGVLIFFGKGVL) form a helical membrane-spanning segment.

Belongs to the ATPase B chain family. In terms of assembly, F-type ATPases have 2 components, F(1) - the catalytic core - and F(0) - the membrane proton channel. F(1) has five subunits: alpha(3), beta(3), gamma(1), delta(1), epsilon(1). F(0) has four main subunits: a(1), b(1), b'(1) and c(10-14). The alpha and beta chains form an alternating ring which encloses part of the gamma chain. F(1) is attached to F(0) by a central stalk formed by the gamma and epsilon chains, while a peripheral stalk is formed by the delta, b and b' chains.

It localises to the plastid. The protein localises to the chloroplast thylakoid membrane. F(1)F(0) ATP synthase produces ATP from ADP in the presence of a proton or sodium gradient. F-type ATPases consist of two structural domains, F(1) containing the extramembraneous catalytic core and F(0) containing the membrane proton channel, linked together by a central stalk and a peripheral stalk. During catalysis, ATP synthesis in the catalytic domain of F(1) is coupled via a rotary mechanism of the central stalk subunits to proton translocation. Its function is as follows. Component of the F(0) channel, it forms part of the peripheral stalk, linking F(1) to F(0). The polypeptide is ATP synthase subunit b, chloroplastic (Manihot esculenta (Cassava)).